A 315-amino-acid polypeptide reads, in one-letter code: Taste receptor type 2 member 3 (315 aa).

Over 1-5 the chain is Extracellular; that stretch reads MGLTE. The helical transmembrane segment at 6–26 threads the bilayer; the sequence is GVFLILSGTQFTLGILVNCFI. Residues 27–41 are Cytoplasmic-facing; sequence ELVNGSSWFKTKRMS. The helical transmembrane segment at 42–62 threads the bilayer; sequence LSDFIITTLALLRIILLCIIL. Residues 63 to 93 lie on the Extracellular side of the membrane; that stretch reads TDSFLIEFSPNTHDSGIIMQIIDVSWTFTNH. The chain crosses the membrane as a helical span at residues 94 to 114; the sequence is LSIWLATCLGVLYCLKIASFS. Residues 115 to 127 lie on the Cytoplasmic side of the membrane; the sequence is HPTFLWLKWRVSR. A helical transmembrane segment spans residues 128-148; that stretch reads VMVWMLLGALLLSCGSTASLI. At 149–185 the chain is on the extracellular side; the sequence is NEFKLYSVFRGIEATRNVTEHFRKKRSEYYLIHVLGT. N-linked (GlcNAc...) asparagine glycosylation occurs at Asn-165. A helical membrane pass occupies residues 186-206; the sequence is LWYLPPLIVSLASYSLLIFSL. Topologically, residues 207–233 are cytoplasmic; it reads GRHTRQMLQNGTSSRDPTTEAHKRAIR. A helical transmembrane segment spans residues 234–254; it reads IILSFFFLFLLYFLAFLIASF. Residues 255–265 lie on the Extracellular side of the membrane; sequence GNFLPKTKMAK. The chain crosses the membrane as a helical span at residues 266–286; it reads MIGEVMTMFYPAGHSFILILG. Residues 287–315 are Cytoplasmic-facing; that stretch reads NSKLKQTFVVMLRCESGHLKPGSKGPIFS.

It belongs to the G-protein coupled receptor T2R family.

It localises to the membrane. Functionally, gustducin-coupled receptor implicated in the perception of bitter compounds in the oral cavity and the gastrointestinal tract. Signals through PLCB2 and the calcium-regulated cation channel TRPM5. In Gorilla gorilla gorilla (Western lowland gorilla), this protein is Taste receptor type 2 member 3 (TAS2R3).